Consider the following 141-residue polypeptide: Large ribosomal subunit protein uL13 (141 aa).

This sequence belongs to the universal ribosomal protein uL13 family. In terms of assembly, part of the 50S ribosomal subunit.

Functionally, this protein is one of the early assembly proteins of the 50S ribosomal subunit, although it is not seen to bind rRNA by itself. It is important during the early stages of 50S assembly. This is Large ribosomal subunit protein uL13 from Helicobacter pylori (strain G27).